The primary structure comprises 165 residues: Large ribosomal subunit protein mL49 (165 aa).

A compositionally biased stretch (low complexity) spans 42 to 75 (TTATTTTPLQQQQQQQPTTQPTTPIQTQTGAAPT). The disordered stretch occupies residues 42-81 (TTATTTTPLQQQQQQQPTTQPTTPIQTQTGAAPTESTKPV).

It belongs to the mitochondrion-specific ribosomal protein mL49 family. Component of the mitochondrial large ribosomal subunit (mt-LSU). Mature N.crassa 74S mitochondrial ribosomes consist of a small (37S) and a large (54S) subunit. The 37S small subunit contains a 16S ribosomal RNA (16S mt-rRNA) and 32 different proteins. The 54S large subunit contains a 23S rRNA (23S mt-rRNA) and 42 different proteins.

The protein localises to the mitochondrion. Functionally, component of the mitochondrial ribosome (mitoribosome), a dedicated translation machinery responsible for the synthesis of mitochondrial genome-encoded proteins, including at least some of the essential transmembrane subunits of the mitochondrial respiratory chain. The mitoribosomes are attached to the mitochondrial inner membrane and translation products are cotranslationally integrated into the membrane. This Neurospora crassa (strain ATCC 24698 / 74-OR23-1A / CBS 708.71 / DSM 1257 / FGSC 987) protein is Large ribosomal subunit protein mL49 (img2).